The primary structure comprises 388 residues: Succinate--CoA ligase [ADP-forming] subunit beta (388 aa).

Residues 9–244 (KEILRKYGVT…LDEEDPAEIE (236 aa)) enclose the ATP-grasp domain. ATP is bound by residues lysine 46, 53–55 (GRG), glutamate 99, alanine 102, and glutamate 107. Residues asparagine 199 and aspartate 213 each coordinate Mg(2+). Residues asparagine 264 and 321-323 (GIM) contribute to the substrate site.

Belongs to the succinate/malate CoA ligase beta subunit family. As to quaternary structure, heterotetramer of two alpha and two beta subunits. Mg(2+) is required as a cofactor.

The catalysed reaction is succinate + ATP + CoA = succinyl-CoA + ADP + phosphate. It carries out the reaction GTP + succinate + CoA = succinyl-CoA + GDP + phosphate. It participates in carbohydrate metabolism; tricarboxylic acid cycle; succinate from succinyl-CoA (ligase route): step 1/1. In terms of biological role, succinyl-CoA synthetase functions in the citric acid cycle (TCA), coupling the hydrolysis of succinyl-CoA to the synthesis of either ATP or GTP and thus represents the only step of substrate-level phosphorylation in the TCA. The beta subunit provides nucleotide specificity of the enzyme and binds the substrate succinate, while the binding sites for coenzyme A and phosphate are found in the alpha subunit. The polypeptide is Succinate--CoA ligase [ADP-forming] subunit beta (Herminiimonas arsenicoxydans).